The chain runs to 448 residues: C4-dicarboxylate transport protein (448 aa).

7 consecutive transmembrane segments (helical) span residues 22–42, 55–75, 90–110, 137–157, 159–179, 199–219, and 232–252; these read FQVV…PAFA, LVKM…IAGM, TYFL…AHVV, ELSL…SAFV, GNIL…ALVG, LVHM…AFTI, and WLVG…LGIV. A disordered region spans residues 428 to 448; it reads RAPPLQAPVPPPDAVAPVSAR. The span at 432 to 441 shows a compositional bias: pro residues; that stretch reads LQAPVPPPDA.

This sequence belongs to the dicarboxylate/amino acid:cation symporter (DAACS) (TC 2.A.23) family.

Its subcellular location is the cell inner membrane. Functionally, responsible for the transport of dicarboxylates such as succinate, fumarate, and malate from the periplasm across the membrane. In Xanthomonas campestris pv. campestris (strain 8004), this protein is C4-dicarboxylate transport protein.